The primary structure comprises 382 residues: Succinyl-diaminopimelate desuccinylase (382 aa).

His73 is a binding site for Zn(2+). Asp75 is an active-site residue. Position 106 (Asp106) interacts with Zn(2+). Glu140 acts as the Proton acceptor in catalysis. Zn(2+)-binding residues include Glu141, Glu169, and His355.

It belongs to the peptidase M20A family. DapE subfamily. In terms of assembly, homodimer. Zn(2+) serves as cofactor. Requires Co(2+) as cofactor.

The enzyme catalyses N-succinyl-(2S,6S)-2,6-diaminopimelate + H2O = (2S,6S)-2,6-diaminopimelate + succinate. The protein operates within amino-acid biosynthesis; L-lysine biosynthesis via DAP pathway; LL-2,6-diaminopimelate from (S)-tetrahydrodipicolinate (succinylase route): step 3/3. Functionally, catalyzes the hydrolysis of N-succinyl-L,L-diaminopimelic acid (SDAP), forming succinate and LL-2,6-diaminopimelate (DAP), an intermediate involved in the bacterial biosynthesis of lysine and meso-diaminopimelic acid, an essential component of bacterial cell walls. In Saccharophagus degradans (strain 2-40 / ATCC 43961 / DSM 17024), this protein is Succinyl-diaminopimelate desuccinylase.